Here is a 327-residue protein sequence, read N- to C-terminus: Malate dehydrogenase 1 (327 aa).

Gly-12–Ala-18 serves as a coordination point for NAD(+). Positions 93 and 99 each coordinate substrate. Residues Asn-106, Gln-113, and Val-130 to Asn-132 each bind NAD(+). Residues Asn-132 and Arg-163 each coordinate substrate. The Proton acceptor role is filled by His-188.

The protein belongs to the LDH/MDH superfamily. MDH type 2 family.

The enzyme catalyses (S)-malate + NAD(+) = oxaloacetate + NADH + H(+). Its function is as follows. Catalyzes the reversible oxidation of malate to oxaloacetate. The chain is Malate dehydrogenase 1 from Burkholderia thailandensis (strain ATCC 700388 / DSM 13276 / CCUG 48851 / CIP 106301 / E264).